The following is a 735-amino-acid chain: Phosphoribosylformylglycinamidine synthase subunit PurL (735 aa).

The active site involves His49. The ATP site is built by Tyr52 and Lys91. Glu93 provides a ligand contact to Mg(2+). Substrate-binding positions include 94–97 and Arg116; that span reads SHNH. His95 (proton acceptor) is an active-site residue. Mg(2+) is bound at residue Asp117. Gln240 contacts substrate. Residue Asp268 coordinates Mg(2+). Substrate is bound at residue 312–314; sequence ESQ. ATP contacts are provided by Asp493 and Gly530. Position 531 (Asn531) interacts with Mg(2+). Residue Ser533 coordinates substrate.

It belongs to the FGAMS family. Monomer. Part of the FGAM synthase complex composed of 1 PurL, 1 PurQ and 2 PurS subunits.

It localises to the cytoplasm. It catalyses the reaction N(2)-formyl-N(1)-(5-phospho-beta-D-ribosyl)glycinamide + L-glutamine + ATP + H2O = 2-formamido-N(1)-(5-O-phospho-beta-D-ribosyl)acetamidine + L-glutamate + ADP + phosphate + H(+). Its pathway is purine metabolism; IMP biosynthesis via de novo pathway; 5-amino-1-(5-phospho-D-ribosyl)imidazole from N(2)-formyl-N(1)-(5-phospho-D-ribosyl)glycinamide: step 1/2. In terms of biological role, part of the phosphoribosylformylglycinamidine synthase complex involved in the purines biosynthetic pathway. Catalyzes the ATP-dependent conversion of formylglycinamide ribonucleotide (FGAR) and glutamine to yield formylglycinamidine ribonucleotide (FGAM) and glutamate. The FGAM synthase complex is composed of three subunits. PurQ produces an ammonia molecule by converting glutamine to glutamate. PurL transfers the ammonia molecule to FGAR to form FGAM in an ATP-dependent manner. PurS interacts with PurQ and PurL and is thought to assist in the transfer of the ammonia molecule from PurQ to PurL. The polypeptide is Phosphoribosylformylglycinamidine synthase subunit PurL (Methylocella silvestris (strain DSM 15510 / CIP 108128 / LMG 27833 / NCIMB 13906 / BL2)).